The sequence spans 254 residues: PF03932 family protein CutC (254 aa).

This sequence belongs to the CutC family.

The protein resides in the cytoplasm. The chain is PF03932 family protein CutC from Yersinia enterocolitica serotype O:8 / biotype 1B (strain NCTC 13174 / 8081).